A 130-amino-acid chain; its full sequence is Small ribosomal subunit protein uS9 (130 aa).

It belongs to the universal ribosomal protein uS9 family.

This is Small ribosomal subunit protein uS9 from Janthinobacterium sp. (strain Marseille) (Minibacterium massiliensis).